The primary structure comprises 770 residues: Coiled-coil alpha-helical rod protein 1 (770 aa).

Coiled coils occupy residues serine 56–alanine 289, leucine 334–glutamine 420, and glycine 476–glutamate 669. 4 disordered regions span residues leucine 573 to glutamine 592, leucine 641 to arginine 672, asparagine 700 to cysteine 721, and serine 744 to serine 770. Basic and acidic residues predominate over residues alanine 648–arginine 672. A compositionally biased stretch (low complexity) spans lysine 701 to cysteine 721.

It localises to the cytoplasm. The protein resides in the nucleus. Functionally, may be a regulator of keratinocyte proliferation or differentiation. In Mus musculus (Mouse), this protein is Coiled-coil alpha-helical rod protein 1 (Cchcr1).